A 519-amino-acid polypeptide reads, in one-letter code: Glutamate--cysteine ligase (519 aa).

The protein belongs to the glutamate--cysteine ligase type 1 family. Type 1 subfamily.

It catalyses the reaction L-cysteine + L-glutamate + ATP = gamma-L-glutamyl-L-cysteine + ADP + phosphate + H(+). It participates in sulfur metabolism; glutathione biosynthesis; glutathione from L-cysteine and L-glutamate: step 1/2. The sequence is that of Glutamate--cysteine ligase from Yersinia enterocolitica serotype O:8 / biotype 1B (strain NCTC 13174 / 8081).